Reading from the N-terminus, the 148-residue chain is Universal stress protein YxiE (148 aa).

The signal sequence occupies residues M1–A18.

It belongs to the universal stress protein A family.

The chain is Universal stress protein YxiE (yxiE) from Bacillus subtilis (strain 168).